Consider the following 581-residue polypeptide: MNTVDPITLAVVRGALETAQREMTLTLEKTSRSSVFNLAHDYSNALFDHLPEMILQGQDIPIHLGSLIPAMKCVAGFFGDEIAEGDVIYHNDPAYMGSHILDCCMYKPVFYKGELVFWTVCKGHLTDIGGPVPAGYNPDAKEIYAEGLRIPPVKLWAQGQRREDVINLLLTNMRARAYQEGDLNAQYGACSVGERHLIELLDRYGVDQVRACITELKDMADRHMRALLRDVPDGFYSGTAILEDSGHGLGELSITAQVEIRGDEAHVLIESPPQVPYFINSYAGNSISGVYLGLMMFAQVPPPYNEGLYRCVSVDLGPSGTLCNAQEPAPHVNCTTTPMETLADAVRLALEQAAPERVTASWGHASGINIAGHDPRNNNDEYVTMVLASVISGAGANKAMDGWPACGPLCCFGALMSGDIELLEYSYPVLIHRYSLMTDSGGAGEFRGGSGTRLELEPLKHAMTVVGFGEGRQLPTAGAAGAKNVLLEPKLGRLIHRHVDGEEDHYIQNTLLTAQPGERVINVNPGGGGYGDPLRRPLATVLADVRNGLVSIDGARLEYGVVIDGNGQLDEAATHAHRAAH.

Positions 41, 99, 102, and 124 each coordinate Zn(2+).

This sequence belongs to the HyuB family. In terms of assembly, the caprolactamase is a heterotetramer composed of two alpha subunits (CapA) and two beta subunits (CapB). Zn(2+) serves as cofactor.

Activity is dependent on the presence of ATP and bicarbonate. The requirement for bicarbonate may be related to allosteric activation through conformational effects, but it is also conceivable that carboxyphosphate is formed and acts as a mediator in caprolactam activation, forming carboxy- or phospholactim. Functionally, component of a caprolactamase involved in the degradation of caprolactam, an industrial compound mainly used in the production of Nylon 6. Catalyzes the ATP-dependent hydrolysis of the caprolactam ring to form 6-aminocaproic acid (6-ACA). The beta subunit is responsible for hydrolytic lactam ring opening. The enzyme cannot use 5-oxoproline. The chain is Caprolactamase subunit beta from Pseudomonas jessenii.